Consider the following 61-residue polypeptide: Potassium channel toxin alpha-KTx 5.3 (61 aa).

A signal peptide spans 1–28 (MHNYYKIVLIMVAFFAVIITFSNIQVEG). Cystine bridges form between Cys31/Cys49, Cys36/Cys54, and Cys40/Cys56. Residues 34–37 (KRCQ) are [R/K]XCQ motif. Histidine amide is present on His59.

It belongs to the short scorpion toxin superfamily. Potassium channel inhibitor family. Alpha-KTx 05 subfamily. As to expression, expressed by the venom gland.

The protein localises to the secreted. Blocks small conductance calcium-activated potassium channels (KCNN, SK). Has also been shown to weakly inhibit Kv11.1/KCNH2/ERG1, Kv1.2/KCNA2, Kv1.3/KCNA3 and Kv2.1/KCNB1 voltage-gated potassium channels. The chain is Potassium channel toxin alpha-KTx 5.3 from Olivierus martensii (Manchurian scorpion).